We begin with the raw amino-acid sequence, 102 residues long: Large ribosomal subunit protein uL23 (102 aa).

It belongs to the universal ribosomal protein uL23 family. As to quaternary structure, part of the 50S ribosomal subunit. Contacts protein L29, and trigger factor when it is bound to the ribosome.

One of the early assembly proteins it binds 23S rRNA. One of the proteins that surrounds the polypeptide exit tunnel on the outside of the ribosome. Forms the main docking site for trigger factor binding to the ribosome. The protein is Large ribosomal subunit protein uL23 of Chromobacterium violaceum (strain ATCC 12472 / DSM 30191 / JCM 1249 / CCUG 213 / NBRC 12614 / NCIMB 9131 / NCTC 9757 / MK).